The following is a 278-amino-acid chain: Elongation factor Ts (278 aa).

Residues 81–84 (TDFV) are involved in Mg(2+) ion dislocation from EF-Tu.

Belongs to the EF-Ts family.

It is found in the cytoplasm. Associates with the EF-Tu.GDP complex and induces the exchange of GDP to GTP. It remains bound to the aminoacyl-tRNA.EF-Tu.GTP complex up to the GTP hydrolysis stage on the ribosome. This is Elongation factor Ts from Thermobifida fusca (strain YX).